The sequence spans 146 residues: Ecotin-like protein 1 (146 aa).

The protein belongs to the protease inhibitor I11 (ecotin) family.

This is Ecotin-like protein 1 (ISP1) from Leishmania infantum.